The following is a 195-amino-acid chain: Proteasome subunit beta 1 (195 aa).

Residues 1–6 (MEELPA) constitute a propeptide, removed in mature form; by autocatalysis. The active-site Nucleophile is the Thr7.

Belongs to the peptidase T1B family. In terms of assembly, the 20S proteasome core is composed of 14 alpha and 14 beta subunits that assemble into four stacked heptameric rings, resulting in a barrel-shaped structure. The two inner rings, each composed of seven catalytic beta subunits, are sandwiched by two outer rings, each composed of seven alpha subunits. The catalytic chamber with the active sites is on the inside of the barrel. Has a gated structure, the ends of the cylinder being occluded by the N-termini of the alpha-subunits. Is capped at one or both ends by the proteasome regulatory ATPase, PAN.

The protein localises to the cytoplasm. It carries out the reaction Cleavage of peptide bonds with very broad specificity.. Its activity is regulated as follows. The formation of the proteasomal ATPase PAN-20S proteasome complex, via the docking of the C-termini of PAN into the intersubunit pockets in the alpha-rings, triggers opening of the gate for substrate entry. Interconversion between the open-gate and close-gate conformations leads to a dynamic regulation of the 20S proteasome proteolysis activity. Functionally, component of the proteasome core, a large protease complex with broad specificity involved in protein degradation. The chain is Proteasome subunit beta 1 from Sulfolobus acidocaldarius (strain ATCC 33909 / DSM 639 / JCM 8929 / NBRC 15157 / NCIMB 11770).